The sequence spans 20 residues: Basic phospholipase A2 cannitoxin alpha chain (20 aa).

As to quaternary structure, heterotrimer of alpha, beta, and gamma chains; non-covalently linked. Requires Ca(2+) as cofactor. As to expression, expressed by the venom gland.

Its subcellular location is the secreted. It catalyses the reaction a 1,2-diacyl-sn-glycero-3-phosphocholine + H2O = a 1-acyl-sn-glycero-3-phosphocholine + a fatty acid + H(+). Heterotrimer: Snake venom phospholipase A2 (PLA2) heterotrimer that acts as a potent presynaptic neurotoxin by blocking synaptic transmission and synaptic vesicle recycling. Enzymatic activity is essential for the neurotoxic effects. May act by binding in a calcium-dependent fashion to neurotonal pentraxin-1 (NPTX1) and neurotonal pentraxin-2 (NPTX2), but not to neuronal pentraxin receptor (NPTXR). Also binds to taipoxin-associated calcium binding protein 49 (RCN2), a protein localized in the lumen of endoplasmic reticulum. Functionally, monomer (alpha chain): Snake venom phospholipase A2 (PLA2) that possesses a low level of presynaptic activity and the same high enzymatic activity than the heterotrimer. PLA2 catalyzes the calcium-dependent hydrolysis of the 2-acyl groups in 3-sn-phosphoglycerides. This Oxyuranus scutellatus canni (Papuan taipan) protein is Basic phospholipase A2 cannitoxin alpha chain.